A 1357-amino-acid chain; its full sequence is Regulator of V-ATPase in vacuolar membrane protein 1 (1357 aa).

8 WD repeats span residues 98–134 (HDDT…GVYQ), 142–182 (KQPK…GEQA), 190–239 (PHPK…KNHT), 384–423 (GHNK…HGVS), 431–470 (QTES…KEDS), 595–636 (INTG…LEYE), 638–679 (TFHN…YTNN), and 898–939 (QKSI…RIAY). The disordered stretch occupies residues 1243–1357 (GSPSASDIES…ITKNLLDDFV (115 aa)). Phosphoserine is present on residues serine 1244 and serine 1248. Over residues 1272–1288 (STSSNSLAQSSSSAPRS) the composition is skewed to low complexity. A compositionally biased stretch (basic and acidic residues) spans 1320 to 1332 (SENRKDKLSKDIL).

In terms of assembly, component of the RAVE complex composed of RAV1, RAV2 and CBF3D/SKP1. Within the complex, it interacts directly with RAV2 and CBF3D. Interacts with the V-ATPase V1 subunits VMA1, VMA2 and VMA8.

The protein localises to the endomembrane system. In terms of biological role, component of the RAVE complex, which is required for stable assembly of the vacuolar ATPase complex V-ATPase under many conditions. Required for transport between the early endosome and the late endosome/prevacuolar compartment (PVC), suggesting that assembly of vacuolar ATPase at the early endosome is required for transport from the early endosome to the PVC. The protein is Regulator of V-ATPase in vacuolar membrane protein 1 (RAV1) of Saccharomyces cerevisiae (strain ATCC 204508 / S288c) (Baker's yeast).